We begin with the raw amino-acid sequence, 234 residues long: Glucosamine-6-phosphate deaminase (234 aa).

The active-site Proton acceptor; for enolization step is the D63. N129 (for ring-opening step) is an active-site residue. The Proton acceptor; for ring-opening step role is filled by H131. The For ring-opening step role is filled by E136.

It belongs to the glucosamine/galactosamine-6-phosphate isomerase family. NagB subfamily.

It carries out the reaction alpha-D-glucosamine 6-phosphate + H2O = beta-D-fructose 6-phosphate + NH4(+). It functions in the pathway amino-sugar metabolism; N-acetylneuraminate degradation; D-fructose 6-phosphate from N-acetylneuraminate: step 5/5. In terms of biological role, catalyzes the reversible isomerization-deamination of glucosamine 6-phosphate (GlcN6P) to form fructose 6-phosphate (Fru6P) and ammonium ion. The protein is Glucosamine-6-phosphate deaminase of Listeria innocua serovar 6a (strain ATCC BAA-680 / CLIP 11262).